The following is a 209-amino-acid chain: Large ribosomal subunit protein uL3 (209 aa).

The tract at residues 141–163 (RAVGSMGASSDPSRTFKNKRMPG) is disordered.

This sequence belongs to the universal ribosomal protein uL3 family. As to quaternary structure, part of the 50S ribosomal subunit. Forms a cluster with proteins L14 and L19.

Functionally, one of the primary rRNA binding proteins, it binds directly near the 3'-end of the 23S rRNA, where it nucleates assembly of the 50S subunit. The protein is Large ribosomal subunit protein uL3 of Clostridium botulinum (strain ATCC 19397 / Type A).